A 245-amino-acid polypeptide reads, in one-letter code: MADS-box transcription factor 55 (245 aa).

The 61-residue stretch at 1–61 (MARERREIRR…GKLSQFASSN (61 aa)) folds into the MADS-box domain. Residues 109-199 (LQLEHSKCSS…RDQMPQVPTA (91 aa)) form the K-box domain. Residues 197–245 (PTAGLAVPDTENVLTEDGQSSESVMTALNSGSSQDNDDGSDISLKLGLP) form a disordered region. A compositionally biased stretch (polar residues) spans 213 to 224 (DGQSSESVMTAL).

As to expression, expressed in roots, shoots and developing panicles. Expressed in shoots.

It is found in the nucleus. Functionally, transcription factor that acts as a negative regulator of brassinosteroid signaling. This Oryza sativa subsp. japonica (Rice) protein is MADS-box transcription factor 55 (MADS55).